The primary structure comprises 110 residues: B3 domain-containing protein LOC_Os02g10420 (110 aa).

Positions 1–104 form a DNA-binding region, TF-B3; the sequence is MSAMLNENVP…VLSVTVHKAD (104 aa).

Its subcellular location is the nucleus. In Oryza sativa subsp. japonica (Rice), this protein is B3 domain-containing protein LOC_Os02g10420.